Consider the following 415-residue polypeptide: Gamma-glutamyl phosphate reductase (415 aa).

Belongs to the gamma-glutamyl phosphate reductase family.

Its subcellular location is the cytoplasm. It carries out the reaction L-glutamate 5-semialdehyde + phosphate + NADP(+) = L-glutamyl 5-phosphate + NADPH + H(+). The protein operates within amino-acid biosynthesis; L-proline biosynthesis; L-glutamate 5-semialdehyde from L-glutamate: step 2/2. Catalyzes the NADPH-dependent reduction of L-glutamate 5-phosphate into L-glutamate 5-semialdehyde and phosphate. The product spontaneously undergoes cyclization to form 1-pyrroline-5-carboxylate. This Carboxydothermus hydrogenoformans (strain ATCC BAA-161 / DSM 6008 / Z-2901) protein is Gamma-glutamyl phosphate reductase.